Here is a 134-residue protein sequence, read N- to C-terminus: Retinol-binding protein 2 (134 aa).

Lys41 and Gln109 together coordinate all-trans-retinol.

This sequence belongs to the calycin superfamily. Fatty-acid binding protein (FABP) family.

Its subcellular location is the cytoplasm. Intracellular transport of retinol. In Sus scrofa (Pig), this protein is Retinol-binding protein 2 (RBP2).